Consider the following 339-residue polypeptide: UDP-galactose transporter homolog 1 (339 aa).

Residues 1-4 (MAGS) are Lumenal-facing. The chain crosses the membrane as a helical span at residues 5–25 (TSSLVICAIGIYATFLTWALV). At 26 to 42 (QEPLATRTWPNSMGKFQ) the chain is on the cytoplasmic side. Residues 43-63 (FPNVISLIQASVAMMMGYLYL) form a helical membrane-spanning segment. Over 64–106 (NWKKVEYPPRKMIKDHWKQLMLISFTQSSSGPLATTSLKHVDY) the chain is Lumenal. A helical membrane pass occupies residues 107-127 (LTYMLAKSCKMIPVLLVHLLL). Residues 128–136 (YRTPIASQK) lie on the Cytoplasmic side of the membrane. Residues 137–157 (KVVALLVSLGVTIFTIGGNDG) traverse the membrane as a helical segment. Residues 158-174 (KKLKRSFNESGNDNKLQ) are Lumenal-facing. An N-linked (GlcNAc...) asparagine glycan is attached at N165. The helical transmembrane segment at 175 to 192 (GFGLLFSSLFLDGLTNAT) threads the bilayer. At 193-214 (QDKLLKANKAKEKGKQTLITGA) the chain is on the cytoplasmic side. Residues 215–235 (HLMFTLNLFVILWNILYFIVI) form a helical membrane-spanning segment. Residues 236–245 (DCKQWDNAVS) are Lumenal-facing. Residues 246–266 (VLTMDPQVWGYLMLYSFCGAM) form a helical membrane-spanning segment. The Cytoplasmic portion of the chain corresponds to 267–280 (GQCFIFYTLEQFGS). The helical transmembrane segment at 281-303 (LVLIMITVTRKMVSMILSIIVFG) threads the bilayer. The Lumenal portion of the chain corresponds to 304–307 (KSVR). A helical transmembrane segment spans residues 308–327 (FQQWVGMFIVFGGITWEALN). Over 328–339 (KKKANIPKAKSA) the chain is Cytoplasmic.

It belongs to the nucleotide-sugar transporter family. SLC35B subfamily.

Its subcellular location is the endoplasmic reticulum membrane. Its function is as follows. May be involved in specific transport of UDP-Gal from the cytosol to the Golgi lumen. Involved in the maintenance of optimal conditions for the folding of secretory pathway proteins in the endoplasmic reticulum. Overexpression confers resistance to the immunosuppressive drug, leflunomide. The chain is UDP-galactose transporter homolog 1 (HUT1) from Saccharomyces cerevisiae (strain ATCC 204508 / S288c) (Baker's yeast).